The chain runs to 142 residues: NTF2-related export protein 2 (142 aa).

Positions 17–136 (AAEEFVNIYY…WKIASDCFRF (120 aa)) constitute an NTF2 domain.

Associates with NXF1, NXF2, NXF3 and NXF5.

The protein localises to the nucleus. The protein resides in the cytoplasm. Functionally, regulator of protein export for NES-containing proteins. Also plays a role in mRNA nuclear export. The protein is NTF2-related export protein 2 of Homo sapiens (Human).